Here is a 418-residue protein sequence, read N- to C-terminus: UDP-N-acetylglucosamine 1-carboxyvinyltransferase (418 aa).

22 to 23 (KN) contributes to the phosphoenolpyruvate binding site. UDP-N-acetyl-alpha-D-glucosamine is bound at residue R93. C117 (proton donor) is an active-site residue. C117 is modified (2-(S-cysteinyl)pyruvic acid O-phosphothioketal). UDP-N-acetyl-alpha-D-glucosamine contacts are provided by D305 and V327.

Belongs to the EPSP synthase family. MurA subfamily.

It is found in the cytoplasm. The catalysed reaction is phosphoenolpyruvate + UDP-N-acetyl-alpha-D-glucosamine = UDP-N-acetyl-3-O-(1-carboxyvinyl)-alpha-D-glucosamine + phosphate. It participates in cell wall biogenesis; peptidoglycan biosynthesis. Functionally, cell wall formation. Adds enolpyruvyl to UDP-N-acetylglucosamine. This Halorhodospira halophila (strain DSM 244 / SL1) (Ectothiorhodospira halophila (strain DSM 244 / SL1)) protein is UDP-N-acetylglucosamine 1-carboxyvinyltransferase.